We begin with the raw amino-acid sequence, 587 residues long: RuBisCO large subunit-binding protein subunit alpha, chloroplastic (587 aa).

Polar residues predominate over residues Met-1 to Ser-25. The interval Met-1–Arg-33 is disordered. A chloroplast-targeting transit peptide spans Met-1–Ala-47.

This sequence belongs to the chaperonin (HSP60) family. Oligomer of probably six alpha and six beta subunits.

It is found in the plastid. The protein resides in the chloroplast. Its function is as follows. This protein binds RuBisCO small and large subunits and is implicated in the assembly of the enzyme oligomer. The protein is RuBisCO large subunit-binding protein subunit alpha, chloroplastic of Pisum sativum (Garden pea).